A 666-amino-acid polypeptide reads, in one-letter code: Spartin (666 aa).

Met1 is subject to N-acetylmethionine. An MIT domain is found at 16–94 (IREAYKKAFL…LQNVRTRLEI (79 aa)). The disordered stretch occupies residues 124-156 (EKLPEPQSFSSAPQHAEVNGNTSTPSAGAVAAP). The segment covering 146–156 (STPSAGAVAAP) has biased composition (low complexity). The tract at residues 190 to 380 (DSGEFSSVGE…QLDQGNKDVR (191 aa)) is ubiquitin-binding region (UBR) domain. The LC3-interacting region (LIR); mediates interaction with MAP1LC3A AND MAP1LC3C signature appears at 193–200 (EFSSVGEE). The disordered stretch occupies residues 344–398 (EENEFQIPGRTRPSSDQLKEASGTDVKQLDQGNKDVRHKGKRGKRAKDTSSEEVN). Lys362 is covalently cross-linked (Glycyl lysine isopeptide (Lys-Gly) (interchain with G-Cter in ubiquitin)). Residues 379-388 (VRHKGKRGKR) are compositionally biased toward basic residues. One can recognise a Senescence domain in the interval 427–611 (ILSGASWVSW…YNINNIGIKA (185 aa)). Residues 431 to 503 (ASWVSWGLVK…LVDGVCTVAN (73 aa)) form a required for localization to lipid droplets region. The residue at position 470 (Ser470) is a Phosphoserine. Residues 636-666 (RENQEGAANVNVRGEKDEQTKEVKEAKKKDK) are disordered. A compositionally biased stretch (basic and acidic residues) spans 648 to 666 (RGEKDEQTKEVKEAKKKDK).

In terms of assembly, interacts with ITCH and WWP1. Interacts (via MIT domain) with IST1; leading to the recruitment of SPART to midbodies. Interacts with MAP1LC3A and MAP1LC3C. Ubiquitinated; ubiquitination does not require ITCH and WWP1. Ubiquitously expressed, with highest levels of expression detected in adipose tissue.

It is found in the cytoplasm. The protein resides in the midbody. It localises to the lipid droplet. Functionally, lipophagy receptor that plays an important role in lipid droplet (LD) turnover in motor neurons. Localizes to LDs and interacts with components of the autophagy machinery, such as MAP1LC3A/C proteins to deliver LDs to autophagosomes for degradation via lipophagy. Lipid transfer protein required for lipid droplet degradation, including by lipophagy. Can bind and transfer all lipid species found in lipid droplets, from phospholipids to triglycerides and sterol esters but the direction of lipid transfer by spartin and its cargos are unknown. May be implicated in endosomal trafficking, or microtubule dynamics, or both. Participates in cytokinesis. This Homo sapiens (Human) protein is Spartin.